We begin with the raw amino-acid sequence, 635 residues long: Probable clathrin assembly protein At4g32285 (635 aa).

An ENTH domain is found at 23 to 159 (VASNMAPDLE…ELALFERRGR (137 aa)). Positions 157-208 (RGRNGGGSSSSHQSNGDDGYNRSRDDFRSPPPRTYDYETGNGFGMPKRSRSF) are disordered. Residues 165 to 174 (SSSHQSNGDD) show a composition bias toward low complexity. A compositionally biased stretch (basic and acidic residues) spans 175-184 (GYNRSRDDFR). Serine 207 is subject to Phosphoserine. Position 224 is a phosphothreonine (threonine 224). The segment covering 357–369 (AKRAKSPERKEIE) has biased composition (basic and acidic residues). A disordered region spans residues 357–412 (AKRAKSPERKEIEAPPAPAPPVEEPVDMNEIKALPPPENHTPPPPPAPEPKPQQPQ). Residues 390-409 (LPPPENHTPPPPPAPEPKPQ) are compositionally biased toward pro residues.

It is found in the membrane. The protein localises to the clathrin-coated pit. Its subcellular location is the golgi apparatus. It localises to the cytoplasmic vesicle. The protein resides in the clathrin-coated vesicle. This Arabidopsis thaliana (Mouse-ear cress) protein is Probable clathrin assembly protein At4g32285.